The following is a 500-amino-acid chain: L-arabinose isomerase (500 aa).

Residues Glu306, Glu333, His350, and His450 each contribute to the Mn(2+) site.

This sequence belongs to the arabinose isomerase family. In terms of assembly, homohexamer. It depends on Mn(2+) as a cofactor.

The enzyme catalyses beta-L-arabinopyranose = L-ribulose. The protein operates within carbohydrate degradation; L-arabinose degradation via L-ribulose; D-xylulose 5-phosphate from L-arabinose (bacterial route): step 1/3. In terms of biological role, catalyzes the conversion of L-arabinose to L-ribulose. This Klebsiella pneumoniae subsp. pneumoniae (strain ATCC 700721 / MGH 78578) protein is L-arabinose isomerase.